The following is a 187-amino-acid chain: UPF0200 protein MA_4660 (187 aa).

Residue 9–16 (GMPASGKS) participates in ATP binding.

Belongs to the UPF0200 family.

This is UPF0200 protein MA_4660 from Methanosarcina acetivorans (strain ATCC 35395 / DSM 2834 / JCM 12185 / C2A).